A 308-amino-acid polypeptide reads, in one-letter code: Glutaminase (308 aa).

The substrate site is built by Ser-66, Asn-117, Glu-161, Asn-168, Tyr-192, Tyr-244, and Val-262.

It belongs to the glutaminase family. As to quaternary structure, homotetramer.

The catalysed reaction is L-glutamine + H2O = L-glutamate + NH4(+). The chain is Glutaminase from Enterobacter sp. (strain 638).